We begin with the raw amino-acid sequence, 740 residues long: Catalase-peroxidase (740 aa).

The tryptophyl-tyrosyl-methioninium (Trp-Tyr) (with M-256) cross-link spans Trp-102 to Tyr-229. His-103 acts as the Proton acceptor in catalysis. A disordered region spans residues Gly-111–Trp-130. The segment at residues Tyr-229 to Met-256 is a cross-link (tryptophyl-tyrosyl-methioninium (Tyr-Met) (with W-102)). His-271 provides a ligand contact to heme b.

The protein belongs to the peroxidase family. Peroxidase/catalase subfamily. As to quaternary structure, homodimer or homotetramer. Heme b serves as cofactor. Formation of the three residue Trp-Tyr-Met cross-link is important for the catalase, but not the peroxidase activity of the enzyme.

It catalyses the reaction H2O2 + AH2 = A + 2 H2O. It carries out the reaction 2 H2O2 = O2 + 2 H2O. In terms of biological role, bifunctional enzyme with both catalase and broad-spectrum peroxidase activity. The chain is Catalase-peroxidase from Erythrobacter litoralis (strain HTCC2594).